The chain runs to 458 residues: MSDNKFIIGSEEWCAFPALGVPAIKARVDSGARTSSIHAVNIRPFKREGEPWVSFELHPIQNSRKIILRCESKVVDRRNIKSSNGESEKRYVIASVIQLGGNAWEVELTLTNRDSMGYRMLLGREAMSNKTLVDPSESFCLGEKGDLEVEQLYGVKTAKKSGLKIGLLASNPDLYSNRRIIEAGEQRGHEMVFLNISQCYLKLDASSPEVHYRGGRVLNNVDAVIPRIRPSMTFYGCALTRHFESLNIEALNTSDAITRSRDKLFSLQLLQKNNLDIPTSGFANSPVDTKDLIDMVGGAPLIVKLLEGTQGKGVVLAETTKAAESVINAFKSLRVNLLVQEFIKEAQGKDLRCFVIDGKIVASIERTAAPGEFRANIHMGGSASIVSVSAAEKQLAIKAAKTMGLRVAGVDIIRSSRGPLLLEINSSPGLEGIESATGIDIAGAMIESIEKKLGWKAD.

The segment at 1–162 (MSDNKFIIGS…YGVKTAKKSG (162 aa)) is unknown. An alpha-L-glutamate ligase region spans residues 163 to 458 (LKIGLLASNP…IEKKLGWKAD (296 aa)). In terms of domain architecture, ATP-grasp spans 267 to 450 (LQLLQKNNLD…IAGAMIESIE (184 aa)). ATP is bound by residues Lys304, 341–342 (EF), Asp350, and 374–376 (RAN). Asp411, Glu423, and Asn425 together coordinate Mg(2+). Mn(2+) is bound by residues Asp411, Glu423, and Asn425.

This sequence in the C-terminal section; belongs to the RimK family. It depends on Mg(2+) as a cofactor. Mn(2+) serves as cofactor.

This Shewanella pealeana (strain ATCC 700345 / ANG-SQ1) protein is Probable alpha-L-glutamate ligase.